The primary structure comprises 113 residues: Large ribosomal subunit protein uL22 (113 aa).

It belongs to the universal ribosomal protein uL22 family. As to quaternary structure, part of the 50S ribosomal subunit.

In terms of biological role, this protein binds specifically to 23S rRNA; its binding is stimulated by other ribosomal proteins, e.g. L4, L17, and L20. It is important during the early stages of 50S assembly. It makes multiple contacts with different domains of the 23S rRNA in the assembled 50S subunit and ribosome. The globular domain of the protein is located near the polypeptide exit tunnel on the outside of the subunit, while an extended beta-hairpin is found that lines the wall of the exit tunnel in the center of the 70S ribosome. The protein is Large ribosomal subunit protein uL22 of Trichlorobacter lovleyi (strain ATCC BAA-1151 / DSM 17278 / SZ) (Geobacter lovleyi).